Here is a 279-residue protein sequence, read N- to C-terminus: Ribosomal RNA small subunit methyltransferase A (279 aa).

Positions 25, 27, 52, 73, 98, and 120 each coordinate S-adenosyl-L-methionine.

It belongs to the class I-like SAM-binding methyltransferase superfamily. rRNA adenine N(6)-methyltransferase family. RsmA subfamily.

It localises to the cytoplasm. It carries out the reaction adenosine(1518)/adenosine(1519) in 16S rRNA + 4 S-adenosyl-L-methionine = N(6)-dimethyladenosine(1518)/N(6)-dimethyladenosine(1519) in 16S rRNA + 4 S-adenosyl-L-homocysteine + 4 H(+). In terms of biological role, specifically dimethylates two adjacent adenosines (A1518 and A1519) in the loop of a conserved hairpin near the 3'-end of 16S rRNA in the 30S particle. May play a critical role in biogenesis of 30S subunits. This is Ribosomal RNA small subunit methyltransferase A from Magnetococcus marinus (strain ATCC BAA-1437 / JCM 17883 / MC-1).